The chain runs to 93 residues: Defensin-like protein 209 (93 aa).

The signal sequence occupies residues 1–19 (MKITILFLTLLVLSSSCTS). 3 disulfide bridges follow: Cys63/Cys80, Cys66/Cys85, and Cys70/Cys87.

This sequence belongs to the DEFL family.

The protein localises to the secreted. This Arabidopsis thaliana (Mouse-ear cress) protein is Defensin-like protein 209.